The chain runs to 207 residues: D-aminoacyl-tRNA deacylase 1 (207 aa).

The Gly-cisPro motif, important for rejection of L-amino acids motif lies at 139–140 (GP). A disordered region spans residues 142 to 207 (TIQLESPPAP…EGDVSSEREP (66 aa)). Basic and acidic residues-rich tracts occupy residues 156 to 167 (LLSKQEKQQQRK) and 178 to 189 (SSREKAAQRSKV).

The protein belongs to the DTD family. In terms of assembly, homodimer.

It is found in the cytoplasm. The catalysed reaction is a D-aminoacyl-tRNA + H2O = a tRNA + a D-alpha-amino acid + H(+). It catalyses the reaction glycyl-tRNA(Ala) + H2O = tRNA(Ala) + glycine + H(+). In terms of biological role, D-aminoacyl-tRNA deacylase, with no observable activity on tRNAs charged with their cognate L-amino acid. Hydrolyzes correctly charged, achiral, glycyl-tRNA(Gly). Deacylates mischarged D.melanogaster and E.coli glycyl-tRNA(Ala), protecting cells against glycine mischarging by AlaRS. Acts via tRNA-based rather than protein-based catalysis; rejects L-amino acids rather than detecting D-amino acids in the active site. By recycling D-aminoacyl-tRNA to D-amino acids and free tRNA molecules, this enzyme counteracts the toxicity associated with the formation of D-aminoacyl-tRNA entities in vivo and helps enforce protein L-homochirality. This Danio rerio (Zebrafish) protein is D-aminoacyl-tRNA deacylase 1.